Here is a 399-residue protein sequence, read N- to C-terminus: Acetate kinase 2 (399 aa).

A Mg(2+)-binding site is contributed by asparagine 10. Lysine 17 contacts ATP. Residue arginine 89 participates in substrate binding. Aspartate 146 serves as the catalytic Proton donor/acceptor. ATP is bound by residues 206–210 (HLGNG), 281–283 (DCR), and 329–333 (GIGEN). Glutamate 384 is a binding site for Mg(2+).

Belongs to the acetokinase family. As to quaternary structure, homodimer. Mg(2+) serves as cofactor. Requires Mn(2+) as cofactor.

Its subcellular location is the cytoplasm. It carries out the reaction acetate + ATP = acetyl phosphate + ADP. It functions in the pathway metabolic intermediate biosynthesis; acetyl-CoA biosynthesis; acetyl-CoA from acetate: step 1/2. Its function is as follows. Catalyzes the formation of acetyl phosphate from acetate and ATP. Can also catalyze the reverse reaction. This is Acetate kinase 2 from Neisseria meningitidis serogroup A / serotype 4A (strain DSM 15465 / Z2491).